Reading from the N-terminus, the 73-residue chain is Large ribosomal subunit protein bL31 (73 aa).

Residues Cys-16, Cys-18, Cys-37, and Cys-40 each coordinate Zn(2+).

The protein belongs to the bacterial ribosomal protein bL31 family. Type A subfamily. As to quaternary structure, part of the 50S ribosomal subunit. It depends on Zn(2+) as a cofactor.

In terms of biological role, binds the 23S rRNA. This chain is Large ribosomal subunit protein bL31, found in Pseudomonas fluorescens (strain ATCC BAA-477 / NRRL B-23932 / Pf-5).